A 220-amino-acid chain; its full sequence is HTH-type transcriptional repressor KstR (220 aa).

Residues 36–96 (RERRKRILDA…SALGREFSRI (61 aa)) enclose the HTH tetR-type domain. The H-T-H motif DNA-binding region spans 59–78 (QMRAVADRADVAVGTLYRYF).

As to quaternary structure, homodimer.

Functionally, controls the expression of genes used for utilizing diverse lipids as energy sources. The chain is HTH-type transcriptional repressor KstR (kstR) from Mycobacterium tuberculosis (strain ATCC 25618 / H37Rv).